The following is a 238-amino-acid chain: Ribonuclease PH (238 aa).

Phosphate-binding positions include arginine 86 and 124-126 (GTR).

The protein belongs to the RNase PH family. Homohexameric ring arranged as a trimer of dimers.

The catalysed reaction is tRNA(n+1) + phosphate = tRNA(n) + a ribonucleoside 5'-diphosphate. Phosphorolytic 3'-5' exoribonuclease that plays an important role in tRNA 3'-end maturation. Removes nucleotide residues following the 3'-CCA terminus of tRNAs; can also add nucleotides to the ends of RNA molecules by using nucleoside diphosphates as substrates, but this may not be physiologically important. Probably plays a role in initiation of 16S rRNA degradation (leading to ribosome degradation) during starvation. In Vibrio parahaemolyticus serotype O3:K6 (strain RIMD 2210633), this protein is Ribonuclease PH.